The chain runs to 261 residues: Claudin-18 (261 aa).

Residues 1 to 6 (MSTTTC) lie on the Cytoplasmic side of the membrane. A helical transmembrane segment spans residues 7-27 (QVVAFLLSILGLAGCIAATGM). Residues 28–80 (DMWSTQDLYDNPVTSVFQYEGLWRSCVRQSSGFTECRPYFTILGLPAMLQAVR) lie on the Extracellular side of the membrane. The chain crosses the membrane as a helical span at residues 81-101 (ALMIVGIVLGAIGLLVSIFAL). Residues 102 to 122 (KCIRIGSMEDSAKANMTLTSG) lie on the Cytoplasmic side of the membrane. The helical transmembrane segment at 123–143 (IMFIVSGLCAIAGVSVFANML) threads the bilayer. The Extracellular segment spans residues 144 to 174 (VTNFWMSTANMYTGMGGMVQTVQTRYTFGAA). Residues 175–195 (LFVGWVAGGLTLIGGVMMCIA) form a helical membrane-spanning segment. A required for role in regulation of RANKL-induced osteoclast differentiation region spans residues 195–261 (ACRGLAPEET…QSYPSKHDYV (67 aa)). Residues 196–261 (CRGLAPEETN…QSYPSKHDYV (66 aa)) are Cytoplasmic-facing. Position 214 is a phosphoserine (serine 214). Residues 242-261 (DGGARTEDEVQSYPSKHDYV) are disordered.

This sequence belongs to the claudin family. In terms of assembly, interacts with TJP2/ZO-2. Interacts with TJP1/ZO-1. Interacts with YAP1 (phosphorylated); the interaction sequesters YAP1 away from the nucleus and thereby restricts transcription of YAP1 target genes. Interacts with CLDN19. Expression is restricted to the lung. In terms of tissue distribution, expression is restricted to the stomach mucosa where it is predominantly observed in the epithelial cells of the pit region and the base of the gastric glands including exocrine and endocrine cells (at protein level).

The protein localises to the cell junction. It localises to the tight junction. It is found in the cell membrane. The protein resides in the lateral cell membrane. Its function is as follows. Involved in alveolar fluid homeostasis via regulation of alveolar epithelial tight junction composition and therefore ion transport and solute permeability, potentially via downstream regulation of the actin cytoskeleton organization and beta-2-adrenergic signaling. Required for lung alveolarization and maintenance of the paracellular alveolar epithelial barrier. Acts to maintain epithelial progenitor cell proliferation and organ size, via regulation of YAP1 localization away from the nucleus and thereby restriction of YAP1 target gene transcription. Acts as a negative regulator of RANKL-induced osteoclast differentiation, potentially via relocation of TJP2/ZO-2 away from the nucleus, subsequently involved in bone resorption in response to calcium deficiency. Mediates the osteoprotective effects of estrogen, potentially via acting downstream of estrogen signaling independently of RANKL signaling pathways. Involved in the maintenance of homeostasis of the alveolar microenvironment via regulation of pH and subsequent T-cell activation in the alveolar space, is therefore indirectly involved in limiting C.neoformans infection. Functionally, required for the formation of the gastric paracellular barrier via its role in tight junction formation, thereby involved in the response to gastric acidification. This Homo sapiens (Human) protein is Claudin-18 (CLDN18).